An 890-amino-acid polypeptide reads, in one-letter code: DNA mismatch repair protein MutS (890 aa).

Position 646–653 (646–653 (GPNMAGKS)) interacts with ATP.

This sequence belongs to the DNA mismatch repair MutS family.

Its function is as follows. This protein is involved in the repair of mismatches in DNA. It is possible that it carries out the mismatch recognition step. This protein has a weak ATPase activity. In Hyphomonas neptunium (strain ATCC 15444), this protein is DNA mismatch repair protein MutS.